We begin with the raw amino-acid sequence, 160 residues long: Cytochrome b6-f complex subunit 4 (160 aa).

3 helical membrane-spanning segments follow: residues 36 to 56, 95 to 115, and 131 to 151; these read LLYI…GLSV, LLGV…PFIE, and TVFL…ALPI.

Belongs to the cytochrome b family. PetD subfamily. As to quaternary structure, the 4 large subunits of the cytochrome b6-f complex are cytochrome b6, subunit IV (17 kDa polypeptide, petD), cytochrome f and the Rieske protein, while the 4 small subunits are petG, petL, petM and petN. The complex functions as a dimer.

Its subcellular location is the plastid. It localises to the chloroplast thylakoid membrane. Component of the cytochrome b6-f complex, which mediates electron transfer between photosystem II (PSII) and photosystem I (PSI), cyclic electron flow around PSI, and state transitions. The sequence is that of Cytochrome b6-f complex subunit 4 from Chaetosphaeridium globosum (Charophycean green alga).